A 226-amino-acid polypeptide reads, in one-letter code: Large ribosomal subunit protein uL1 (226 aa).

This sequence belongs to the universal ribosomal protein uL1 family. In terms of assembly, part of the 50S ribosomal subunit.

Binds directly to 23S rRNA. The L1 stalk is quite mobile in the ribosome, and is involved in E site tRNA release. Its function is as follows. Protein L1 is also a translational repressor protein, it controls the translation of the L11 operon by binding to its mRNA. This Selenomonas ruminantium protein is Large ribosomal subunit protein uL1.